The primary structure comprises 226 residues: Orotidine 5'-phosphate decarboxylase (226 aa).

Residues aspartate 8, lysine 30, 58–67 (DLKIHDIPNT), threonine 117, arginine 177, glutamine 186, glycine 206, and arginine 207 contribute to the substrate site. Lysine 60 serves as the catalytic Proton donor.

Belongs to the OMP decarboxylase family. Type 1 subfamily. As to quaternary structure, homodimer.

It carries out the reaction orotidine 5'-phosphate + H(+) = UMP + CO2. Its pathway is pyrimidine metabolism; UMP biosynthesis via de novo pathway; UMP from orotate: step 2/2. Functionally, catalyzes the decarboxylation of orotidine 5'-monophosphate (OMP) to uridine 5'-monophosphate (UMP). This is Orotidine 5'-phosphate decarboxylase from Campylobacter jejuni subsp. jejuni serotype O:6 (strain 81116 / NCTC 11828).